We begin with the raw amino-acid sequence, 335 residues long: Adenosine deaminase (335 aa).

The Zn(2+) site is built by His12 and His14. The substrate site is built by His14 and Asp16. His197 is a Zn(2+) binding site. Catalysis depends on Glu200, which acts as the Proton donor. Asp278 contacts Zn(2+).

This sequence belongs to the metallo-dependent hydrolases superfamily. Adenosine and AMP deaminases family. Adenosine deaminase subfamily. Zn(2+) is required as a cofactor.

It carries out the reaction adenosine + H2O + H(+) = inosine + NH4(+). It catalyses the reaction 2'-deoxyadenosine + H2O + H(+) = 2'-deoxyinosine + NH4(+). Its function is as follows. Catalyzes the hydrolytic deamination of adenosine and 2-deoxyadenosine. This chain is Adenosine deaminase, found in Clostridium botulinum (strain Kyoto / Type A2).